Here is a 73-residue protein sequence, read N- to C-terminus: Translation initiation factor IF-1 (73 aa).

Residues 1 to 73 (MPKKDGAIEI…SRGRIVYRYK (73 aa)) form the S1-like domain.

Belongs to the IF-1 family. As to quaternary structure, component of the 30S ribosomal translation pre-initiation complex which assembles on the 30S ribosome in the order IF-2 and IF-3, IF-1 and N-formylmethionyl-tRNA(fMet); mRNA recruitment can occur at any time during PIC assembly.

Its subcellular location is the cytoplasm. Its function is as follows. One of the essential components for the initiation of protein synthesis. Stabilizes the binding of IF-2 and IF-3 on the 30S subunit to which N-formylmethionyl-tRNA(fMet) subsequently binds. Helps modulate mRNA selection, yielding the 30S pre-initiation complex (PIC). Upon addition of the 50S ribosomal subunit IF-1, IF-2 and IF-3 are released leaving the mature 70S translation initiation complex. This Frankia alni (strain DSM 45986 / CECT 9034 / ACN14a) protein is Translation initiation factor IF-1.